A 201-amino-acid polypeptide reads, in one-letter code: Imidazole glycerol phosphate synthase subunit HisH (201 aa).

The 201-residue stretch at 1 to 201 folds into the Glutamine amidotransferase type-1 domain; the sequence is MVFIADYGAG…LKVLANFAEL (201 aa). Residue C79 is the Nucleophile of the active site. Residues H183 and E185 contribute to the active site.

Heterodimer of HisH and HisF.

Its subcellular location is the cytoplasm. It catalyses the reaction 5-[(5-phospho-1-deoxy-D-ribulos-1-ylimino)methylamino]-1-(5-phospho-beta-D-ribosyl)imidazole-4-carboxamide + L-glutamine = D-erythro-1-(imidazol-4-yl)glycerol 3-phosphate + 5-amino-1-(5-phospho-beta-D-ribosyl)imidazole-4-carboxamide + L-glutamate + H(+). The catalysed reaction is L-glutamine + H2O = L-glutamate + NH4(+). Its pathway is amino-acid biosynthesis; L-histidine biosynthesis; L-histidine from 5-phospho-alpha-D-ribose 1-diphosphate: step 5/9. IGPS catalyzes the conversion of PRFAR and glutamine to IGP, AICAR and glutamate. The HisH subunit catalyzes the hydrolysis of glutamine to glutamate and ammonia as part of the synthesis of IGP and AICAR. The resulting ammonia molecule is channeled to the active site of HisF. The protein is Imidazole glycerol phosphate synthase subunit HisH of Chlorobium chlorochromatii (strain CaD3).